The sequence spans 503 residues: Probable cytosol aminopeptidase (503 aa).

Positions 268 and 273 each coordinate Mn(2+). Residue K280 is part of the active site. D291, D350, and E352 together coordinate Mn(2+). R354 is a catalytic residue.

Belongs to the peptidase M17 family. Requires Mn(2+) as cofactor.

It localises to the cytoplasm. It catalyses the reaction Release of an N-terminal amino acid, Xaa-|-Yaa-, in which Xaa is preferably Leu, but may be other amino acids including Pro although not Arg or Lys, and Yaa may be Pro. Amino acid amides and methyl esters are also readily hydrolyzed, but rates on arylamides are exceedingly low.. The catalysed reaction is Release of an N-terminal amino acid, preferentially leucine, but not glutamic or aspartic acids.. Presumably involved in the processing and regular turnover of intracellular proteins. Catalyzes the removal of unsubstituted N-terminal amino acids from various peptides. This chain is Probable cytosol aminopeptidase, found in Nocardia farcinica (strain IFM 10152).